Consider the following 238-residue polypeptide: Large ribosomal subunit protein uL1 (238 aa).

This sequence belongs to the universal ribosomal protein uL1 family. In terms of assembly, part of the 50S ribosomal subunit.

Its function is as follows. Binds directly to 23S rRNA. The L1 stalk is quite mobile in the ribosome, and is involved in E site tRNA release. In terms of biological role, protein L1 is also a translational repressor protein, it controls the translation of the L11 operon by binding to its mRNA. In Gloeobacter violaceus (strain ATCC 29082 / PCC 7421), this protein is Large ribosomal subunit protein uL1.